An 892-amino-acid polypeptide reads, in one-letter code: Translation initiation factor IF-2 (892 aa).

The segment at 88 to 305 (KKRTFVKRDP…SLQQGFQKPA (218 aa)) is disordered. 2 stretches are compositionally biased toward basic and acidic residues: residues 93–159 (VKRD…KDKV) and 166–216 (DMTK…EENK). Positions 254–269 (GRGRNAKAARPAKKGK) are enriched in basic residues. Over residues 270 to 282 (HAESKADREEARA) the composition is skewed to basic and acidic residues. In terms of domain architecture, tr-type G spans 391–560 (PRAPVVTIMG…LLQAEVLELK (170 aa)). The G1 stretch occupies residues 400–407 (GHVDHGKT). 400-407 (GHVDHGKT) lines the GTP pocket. The segment at 425 to 429 (GITQH) is G2. Residues 446–449 (DTPG) are G3. Residues 446–450 (DTPGH) and 500–503 (NKID) contribute to the GTP site. A G4 region spans residues 500–503 (NKID). Residues 536-538 (SAK) form a G5 region.

This sequence belongs to the TRAFAC class translation factor GTPase superfamily. Classic translation factor GTPase family. IF-2 subfamily.

The protein localises to the cytoplasm. In terms of biological role, one of the essential components for the initiation of protein synthesis. Protects formylmethionyl-tRNA from spontaneous hydrolysis and promotes its binding to the 30S ribosomal subunits. Also involved in the hydrolysis of GTP during the formation of the 70S ribosomal complex. This chain is Translation initiation factor IF-2, found in Salmonella paratyphi A (strain ATCC 9150 / SARB42).